The chain runs to 328 residues: N-acetyl-gamma-glutamyl-phosphate reductase (328 aa).

The active site involves C143.

It belongs to the NAGSA dehydrogenase family. Type 1 subfamily.

The protein resides in the cytoplasm. It catalyses the reaction N-acetyl-L-glutamate 5-semialdehyde + phosphate + NADP(+) = N-acetyl-L-glutamyl 5-phosphate + NADPH + H(+). Its pathway is amino-acid biosynthesis; L-arginine biosynthesis; N(2)-acetyl-L-ornithine from L-glutamate: step 3/4. In terms of biological role, catalyzes the NADPH-dependent reduction of N-acetyl-5-glutamyl phosphate to yield N-acetyl-L-glutamate 5-semialdehyde. This Methanosphaerula palustris (strain ATCC BAA-1556 / DSM 19958 / E1-9c) protein is N-acetyl-gamma-glutamyl-phosphate reductase.